The primary structure comprises 691 residues: Elongation factor G (691 aa).

In terms of domain architecture, tr-type G spans 8–282 (ERVRNIGIAA…AVVDYLPAPV (275 aa)). Residues 17-24 (AHIDAGKT), 81-85 (DTPGH), and 135-138 (NKMD) contribute to the GTP site.

The protein belongs to the TRAFAC class translation factor GTPase superfamily. Classic translation factor GTPase family. EF-G/EF-2 subfamily.

It is found in the cytoplasm. Functionally, catalyzes the GTP-dependent ribosomal translocation step during translation elongation. During this step, the ribosome changes from the pre-translocational (PRE) to the post-translocational (POST) state as the newly formed A-site-bound peptidyl-tRNA and P-site-bound deacylated tRNA move to the P and E sites, respectively. Catalyzes the coordinated movement of the two tRNA molecules, the mRNA and conformational changes in the ribosome. This chain is Elongation factor G, found in Prochlorococcus marinus (strain MIT 9211).